A 602-amino-acid polypeptide reads, in one-letter code: Non structural protein VP9' (602 aa).

It is found in the host cytoplasm. The sequence is that of Non structural protein VP9' from Callospermophilus lateralis (Golden-mantled ground squirrel).